Reading from the N-terminus, the 504-residue chain is Catalase (504 aa).

Catalysis depends on residues His-56 and Asn-129. Residue Tyr-339 coordinates heme.

The protein belongs to the catalase family. Homodimer. It depends on heme as a cofactor.

The catalysed reaction is 2 H2O2 = O2 + 2 H2O. Decomposes hydrogen peroxide into water and oxygen; serves to protect cells from the toxic effects of hydrogen peroxide. The protein is Catalase (katA) of Staphylococcus epidermidis.